Reading from the N-terminus, the 211-residue chain is Orotate phosphoribosyltransferase (211 aa).

5-phospho-alpha-D-ribose 1-diphosphate-binding positions include Arg-103, Lys-107, His-109, and 129-137; that span reads EDLISTGKS. Ser-133 contributes to the orotate binding site.

The protein belongs to the purine/pyrimidine phosphoribosyltransferase family. PyrE subfamily. In terms of assembly, homodimer. It depends on Mg(2+) as a cofactor.

The catalysed reaction is orotidine 5'-phosphate + diphosphate = orotate + 5-phospho-alpha-D-ribose 1-diphosphate. It functions in the pathway pyrimidine metabolism; UMP biosynthesis via de novo pathway; UMP from orotate: step 1/2. Catalyzes the transfer of a ribosyl phosphate group from 5-phosphoribose 1-diphosphate to orotate, leading to the formation of orotidine monophosphate (OMP). In Fusobacterium nucleatum subsp. nucleatum (strain ATCC 25586 / DSM 15643 / BCRC 10681 / CIP 101130 / JCM 8532 / KCTC 2640 / LMG 13131 / VPI 4355), this protein is Orotate phosphoribosyltransferase.